The chain runs to 150 residues: uncharacterized protein (150 aa).

The 145-residue stretch at 4 to 148 folds into the Flavodoxin-like domain; sequence LILYKSIHHK…KAKEFAKSIL (145 aa).

This is an uncharacterized protein from Methanocaldococcus jannaschii (strain ATCC 43067 / DSM 2661 / JAL-1 / JCM 10045 / NBRC 100440) (Methanococcus jannaschii).